The chain runs to 189 residues: dCTP deaminase (189 aa).

DCTP-binding positions include 112-117, 136-138, glutamine 157, tyrosine 171, and glutamine 181; these read KSTYAR and TLE. Glutamate 138 acts as the Proton donor/acceptor in catalysis.

This sequence belongs to the dCTP deaminase family. Homotrimer.

The enzyme catalyses dCTP + H2O + H(+) = dUTP + NH4(+). Its pathway is pyrimidine metabolism; dUMP biosynthesis; dUMP from dCTP (dUTP route): step 1/2. Functionally, catalyzes the deamination of dCTP to dUTP. This chain is dCTP deaminase, found in Acinetobacter baumannii (strain SDF).